The chain runs to 421 residues: Chitin deacetylase (421 aa).

Residues 1–21 (MQIKTFALSAAIAQVATLALA) form the signal peptide. 4 N-linked (GlcNAc...) asparagine glycosylation sites follow: asparagine 39, asparagine 70, asparagine 87, and asparagine 106. One can recognise a NodB homology domain in the interval 157–349 (ETWGLTYDDG…YKQVIDVATC (193 aa)). The active-site Proton acceptor is the aspartate 164. Aspartate 164 contacts acetate. A Co(2+)-binding site is contributed by aspartate 165. Asparagine 168 is a glycosylation site (N-linked (GlcNAc...) asparagine). 2 residues coordinate Co(2+): histidine 214 and histidine 218. Tyrosine 255 lines the acetate pocket. Asparagine 307 carries an N-linked (GlcNAc...) asparagine glycan. Histidine 320 functions as the Proton donor in the catalytic mechanism. Asparagine 323, asparagine 351, and asparagine 367 each carry an N-linked (GlcNAc...) asparagine glycan. A lipid anchor (GPI-anchor amidated threonine) is attached at threonine 390. Positions 391 to 421 (AAAHIQASTSGAMSVLPNLALISAFIATLLF) are cleaved as a propeptide — removed in mature form.

Belongs to the polysaccharide deacetylase family. Co(2+) serves as cofactor.

Its subcellular location is the secreted. The protein resides in the cell wall. The protein localises to the cell membrane. It carries out the reaction [(1-&gt;4)-N-acetyl-beta-D-glucosaminyl](n) + n H2O = chitosan + n acetate. In terms of biological role, hydrolyzes the N-acetamido groups of N-acetyl-D-glucosamine residues in chitin to form chitosan and acetate. This Amylomyces rouxii (Filamentous fungus) protein is Chitin deacetylase.